The chain runs to 122 residues: Small ribosomal subunit protein uS13 (122 aa).

Positions 99 to 122 (RGQRTHTNARTRKGPAKAIAGKKK) are disordered.

Belongs to the universal ribosomal protein uS13 family. As to quaternary structure, part of the 30S ribosomal subunit. Forms a loose heterodimer with protein S19. Forms two bridges to the 50S subunit in the 70S ribosome.

In terms of biological role, located at the top of the head of the 30S subunit, it contacts several helices of the 16S rRNA. In the 70S ribosome it contacts the 23S rRNA (bridge B1a) and protein L5 of the 50S subunit (bridge B1b), connecting the 2 subunits; these bridges are implicated in subunit movement. Contacts the tRNAs in the A and P-sites. This Rhizobium etli (strain ATCC 51251 / DSM 11541 / JCM 21823 / NBRC 15573 / CFN 42) protein is Small ribosomal subunit protein uS13.